The sequence spans 146 residues: Hemoglobin subunit beta (146 aa).

The Globin domain occupies 2-146 (HWTAEEKQLI…VAHALARKYH (145 aa)). Heme b is bound by residues His-63 and His-92.

It belongs to the globin family. As to quaternary structure, heterotetramer of two alpha chains and two beta chains. In terms of tissue distribution, red blood cells.

Involved in oxygen transport from the lung to the various peripheral tissues. The sequence is that of Hemoglobin subunit beta (HBB) from Anas platyrhynchos platyrhynchos (Northern mallard).